A 382-amino-acid polypeptide reads, in one-letter code: p21-activated protein kinase-interacting protein 1 (382 aa).

WD repeat units lie at residues 37 to 77 (THHS…EHGA), 80 to 120 (HHAG…KTFK), 122 to 160 (HRGH…SAFI), 202 to 240 (TNGK…CLCE), and 243 to 284 (AHEN…KVPP). Residues 313–382 (LPPAAEPCPD…MSEKKRKKKM (70 aa)) form a disordered region. The span at 352–363 (DSKQPTKGNSPV) shows a compositional bias: polar residues. Basic residues predominate over residues 365–382 (AKKRKMATMSEKKRKKKM).

As to quaternary structure, interacts with PAK1.

The protein localises to the nucleus. Its subcellular location is the nucleolus. Its function is as follows. Negatively regulates the PAK1 kinase. PAK1 is a member of the PAK kinase family, which has been shown to play a positive role in the regulation of signaling pathways involving MAPK8 and RELA. PAK1 exists as an inactive homodimer, which is activated by binding of small GTPases such as CDC42 to an N-terminal regulatory domain. PAK1IP1 also binds to the N-terminus of PAK1, and inhibits the specific activation of PAK1 by CDC42. May be involved in ribosomal large subunit assembly. The sequence is that of p21-activated protein kinase-interacting protein 1 (Pak1ip1) from Mus musculus (Mouse).